A 939-amino-acid polypeptide reads, in one-letter code: Translation initiation factor IF-2 (939 aa).

The segment at 57 to 274 (RLKPAAPAAP…APTKKNEQKI (218 aa)) is disordered. Composition is skewed to basic and acidic residues over residues 83–122 (MEPKEEPQKEVKESVKEAPESLPESPKEEAFEAEIPKESV) and 129–138 (LEQEPPKEEL). 2 stretches are compositionally biased toward polar residues: residues 146-158 (ESASETLSDSNPL) and 170-180 (VATTLATQTDA). The segment covering 208 to 227 (KRSEEPAPKADRPSLEEART) has biased composition (basic and acidic residues). Positions 252–262 (ARKKKKEKKKP) are enriched in basic residues. The region spanning 438–607 (ERPPVVTIMG…LVQSELLELK (170 aa)) is the tr-type G domain. The tract at residues 447-454 (GHVDHGKT) is G1. 447–454 (GHVDHGKT) provides a ligand contact to GTP. Residues 472 to 476 (GITQH) form a G2 region. The segment at 493-496 (DTPG) is G3. Residues 493 to 497 (DTPGH) and 547 to 550 (NKVD) each bind GTP. Residues 547–550 (NKVD) are G4. The interval 583 to 585 (SAK) is G5.

Belongs to the TRAFAC class translation factor GTPase superfamily. Classic translation factor GTPase family. IF-2 subfamily.

The protein resides in the cytoplasm. In terms of biological role, one of the essential components for the initiation of protein synthesis. Protects formylmethionyl-tRNA from spontaneous hydrolysis and promotes its binding to the 30S ribosomal subunits. Also involved in the hydrolysis of GTP during the formation of the 70S ribosomal complex. In Wolinella succinogenes (strain ATCC 29543 / DSM 1740 / CCUG 13145 / JCM 31913 / LMG 7466 / NCTC 11488 / FDC 602W) (Vibrio succinogenes), this protein is Translation initiation factor IF-2.